Here is a 200-residue protein sequence, read N- to C-terminus: GTP cyclohydrolase-2 (200 aa).

Position 50 to 54 (50 to 54 (RIHSE)) interacts with GTP. Residues C55, C66, and C68 each contribute to the Zn(2+) site. Residues Q71, 93 to 95 (EGR), and T115 contribute to the GTP site. D127 acts as the Proton acceptor in catalysis. R129 acts as the Nucleophile in catalysis. Positions 150 and 155 each coordinate GTP.

This sequence belongs to the GTP cyclohydrolase II family. It depends on Zn(2+) as a cofactor.

The enzyme catalyses GTP + 4 H2O = 2,5-diamino-6-hydroxy-4-(5-phosphoribosylamino)-pyrimidine + formate + 2 phosphate + 3 H(+). The protein operates within cofactor biosynthesis; riboflavin biosynthesis; 5-amino-6-(D-ribitylamino)uracil from GTP: step 1/4. Its function is as follows. Catalyzes the conversion of GTP to 2,5-diamino-6-ribosylamino-4(3H)-pyrimidinone 5'-phosphate (DARP), formate and pyrophosphate. The sequence is that of GTP cyclohydrolase-2 from Acinetobacter baylyi (strain ATCC 33305 / BD413 / ADP1).